We begin with the raw amino-acid sequence, 290 residues long: Ribosomal RNA small subunit methyltransferase A (290 aa).

6 residues coordinate S-adenosyl-L-methionine: Asn27, Leu29, Gly54, Glu75, Asp100, and Asn125.

The protein belongs to the class I-like SAM-binding methyltransferase superfamily. rRNA adenine N(6)-methyltransferase family. RsmA subfamily.

Its subcellular location is the cytoplasm. The enzyme catalyses adenosine(1518)/adenosine(1519) in 16S rRNA + 4 S-adenosyl-L-methionine = N(6)-dimethyladenosine(1518)/N(6)-dimethyladenosine(1519) in 16S rRNA + 4 S-adenosyl-L-homocysteine + 4 H(+). In terms of biological role, specifically dimethylates two adjacent adenosines (A1518 and A1519) in the loop of a conserved hairpin near the 3'-end of 16S rRNA in the 30S particle. May play a critical role in biogenesis of 30S subunits. The chain is Ribosomal RNA small subunit methyltransferase A from Streptococcus pneumoniae (strain ATCC 700669 / Spain 23F-1).